A 613-amino-acid chain; its full sequence is MGRIGISCLFPASWHFSISPVGCPRILNTNLRQIVVISILAAAVSLLYFSVVIIRSKYGWLSKDKKFQRYLARVTDVEATDTNNPSVNYGIVVDCGSSGSRIFVYCWPRHNGNPHDLLDIRQMRDKNRKPVVMKIKPGISEFATSPEKVSDYISPLLSFAAEHVPRAKHKETPLYILCTAGMRVLPESQQKAILEDLLTDIPVHYDFLFSDSHAEVISGKQEGVYAWIGINFVLGRFEHIEEDDEAVVEVNIPGSESSEAIVRKRTAGVLDMGGVSTQIAYEVPQTVSFASSQQEEVAKNLLAEFNLGCDVHQTEHVYRVYVATFLGFGGNAARQRYEDRLFASTVQKNRLLGKQTGLTPDAPLLDPCLPLDIKDEIQQNGQTLYLQGTGDFDLCRETLQPFMNKTNETQTSLNGVYQPPIHFQNSEFYGFSEFYYCTEDVLRMGGDYNAARFTQAAKDYCATKWSILRERFDRGLYASHADLHRLKYQCFKSAWMFEVFHKGFSFPVTYKNLKTALQVYDKEVQWTLGAILYRTRFLPLRDIRQEVFRAGHAHWRGVSFVYNHYLFSGCFLVVLLSILLYLLRLRRIHRRAPRTGSLWMEEGLPSQKGPGPL.

Residues 1–33 (MGRIGISCLFPASWHFSISPVGCPRILNTNLRQ) lie on the Cytoplasmic side of the membrane. A helical membrane pass occupies residues 34–54 (IVVISILAAAVSLLYFSVVII). Residues 55-559 (RSKYGWLSKD…AGHAHWRGVS (505 aa)) are Lumenal-facing. Glu-222 acts as the Proton acceptor in catalysis. Cys-368 and Cys-395 form a disulfide bridge. Asn-404 and Asn-407 each carry an N-linked (GlcNAc...) asparagine glycan. Cys-461 and Cys-490 are joined by a disulfide. Residues 560 to 580 (FVYNHYLFSGCFLVVLLSILL) form a helical membrane-spanning segment. Residues 581–613 (YLLRLRRIHRRAPRTGSLWMEEGLPSQKGPGPL) are Cytoplasmic-facing.

Belongs to the GDA1/CD39 NTPase family. The cofactor is Ca(2+). Requires Mg(2+) as cofactor. In terms of tissue distribution, ubiquitous.

Its subcellular location is the cytoplasmic vesicle. It is found in the autophagosome membrane. The protein resides in the lysosome membrane. It localises to the golgi apparatus membrane. The catalysed reaction is a ribonucleoside 5'-triphosphate + H2O = a ribonucleoside 5'-diphosphate + phosphate + H(+). It carries out the reaction a ribonucleoside 5'-diphosphate + H2O = a ribonucleoside 5'-phosphate + phosphate + H(+). The enzyme catalyses UDP + H2O = UMP + phosphate + H(+). It catalyses the reaction UTP + H2O = UDP + phosphate + H(+). The catalysed reaction is CTP + H2O = CDP + phosphate + H(+). It carries out the reaction GDP + H2O = GMP + phosphate + H(+). The enzyme catalyses 5-methyl-UTP + H2O = 5-methyl-UDP + phosphate + H(+). Its function is as follows. Catalyzes the hydrolysis of nucleoside triphosphates and diphosphates in a calcium- or magnesium-dependent manner, with a preference for pyrimidines. Preferentially hydrolyzes UTP and TTP on UTP and TTP. AMP, ADP, ATP and UMP are not substrates. Preferentially activated by Ca(2+) over Mg(2+). Functionally, has a broad substrate specificity with the ability of cleaving all nucleotide di- and triphosphates with the exception of adenosine di- and triphosphate (ADP and ATP). Preferentially hydrolyzes CTP, UDP, CDP, GTP and GDP. Can use either Ca(2+) or Mg(2+) equally. The polypeptide is Ectonucleoside triphosphate diphosphohydrolase 4 (Entpd4) (Mus musculus (Mouse)).